The sequence spans 249 residues: Vesicle-associated membrane protein-associated protein A (249 aa).

N-acetylalanine is present on alanine 2. Residues alanine 2 to proline 227 lie on the Cytoplasmic side of the membrane. The MSP domain occupies isoleucine 14–glutamate 131. Residues lysine 50–threonine 53 are phosphorylated FFAT motif binding. Lysine 125 carries the post-translational modification N6-acetyllysine. Positions glutamate 135–proline 144 are enriched in basic and acidic residues. The segment at glutamate 135–serine 166 is disordered. The residue at position 166 (serine 166) is a Phosphoserine. Positions asparagine 168–alanine 207 form a coiled coil. Position 170 is a phosphothreonine (threonine 170). A phosphoserine mark is found at serine 214, serine 216, and serine 219. The helical; Anchor for type IV membrane protein transmembrane segment at leucine 228–isoleucine 248 threads the bilayer.

Belongs to the VAMP-associated protein (VAP) (TC 9.B.17) family. As to quaternary structure, homodimer; disulfide-linked. Heterodimer with VAPB. Interacts with VAMP1, VAMP2, STX1A, BET1, SEC22C and with the C-terminal domain of OCLN. Interacts (via MSP domain) with OSBPL1A (via FFAT motif). Interacts (via MSP domain) with ZFYVE27; may retain ZFYVE27 in the endoplasmic reticulum and regulate its function in cell projections formation. Interacts with OSBP. Interacts (via C-terminus) with RSAD2/viperin (via C-terminus). Interacts with IFITM3. Interacts with OSBPL3 (phosphorylated form). Interacts with KIF5A in a ZFYVE27-dependent manner. Interacts (via MSP domain) with STARD3 (via phosphorylated FFAT motif); this interaction recruits VAPA to the endosome. Interacts with STARD3NL (via FFAT motif). Interacts with CERT1. Interacts with PLEKHA3 and SACM1L to form a ternary complex. Interacts with VPS13A (via FFAT motif). Interacts with RB1CC1 (via phosphorylated FFAT motif), MIGA2 (via phosphorylated FFAT motif), RMDN3 (via phosphorylated FFAT motif), KCNB1 (via phosphorylated FFAT motif) and KCNB2 (via phosphorylated FFAT motif). Interacts (via MSP domain) with WDR44; the interactions connect the endoplasmic reticulum (ER) with the endosomal tubule. In terms of tissue distribution, ubiquitous.

It localises to the endoplasmic reticulum membrane. It is found in the cell membrane. The protein resides in the cell junction. The protein localises to the tight junction. Its subcellular location is the nucleus membrane. Its function is as follows. Endoplasmic reticulum (ER)-anchored protein that mediates the formation of contact sites between the ER and endosomes via interaction with FFAT motif-containing proteins such as STARD3 or WDR44. STARD3-VAPA interaction enables cholesterol transfer from the ER to endosomes. Via interaction with WDR44 participates in neosynthesized protein export. In addition, recruited to the plasma membrane through OSBPL3 binding. The OSBPL3-VAPA complex stimulates RRAS signaling which in turn attenuates integrin beta-1 (ITGB1) activation at the cell surface. With OSBPL3, may regulate ER morphology. May play a role in vesicle trafficking. This is Vesicle-associated membrane protein-associated protein A from Rattus norvegicus (Rat).